Here is a 191-residue protein sequence, read N- to C-terminus: Large ribosomal subunit protein uL5 (191 aa).

It belongs to the universal ribosomal protein uL5 family. In terms of assembly, part of the 50S ribosomal subunit; part of the 5S rRNA/L5/L18/L25 subcomplex. Contacts the 5S rRNA and the P site tRNA. Forms a bridge to the 30S subunit in the 70S ribosome.

Its function is as follows. This is one of the proteins that bind and probably mediate the attachment of the 5S RNA into the large ribosomal subunit, where it forms part of the central protuberance. In the 70S ribosome it contacts protein S13 of the 30S subunit (bridge B1b), connecting the 2 subunits; this bridge is implicated in subunit movement. Contacts the P site tRNA; the 5S rRNA and some of its associated proteins might help stabilize positioning of ribosome-bound tRNAs. This chain is Large ribosomal subunit protein uL5, found in Micrococcus luteus (Micrococcus lysodeikticus).